An 84-amino-acid polypeptide reads, in one-letter code: Large ribosomal subunit protein uL23 (84 aa).

Belongs to the universal ribosomal protein uL23 family. In terms of assembly, part of the 50S ribosomal subunit. Contacts protein L29.

Functionally, binds to 23S rRNA. One of the proteins that surrounds the polypeptide exit tunnel on the outside of the ribosome. The sequence is that of Large ribosomal subunit protein uL23 from Thermoplasma acidophilum (strain ATCC 25905 / DSM 1728 / JCM 9062 / NBRC 15155 / AMRC-C165).